The primary structure comprises 188 residues: Dual specificity protein phosphatase 18 (188 aa).

Residues 19–160 enclose the Tyrosine-protein phosphatase domain; it reads GLSQITKSLY…LIHYEFQLFG (142 aa). The segment at 95–141 is sufficient for mitochondrial localization; that stretch reads MKQGRTLLHCAAGVSRSAALCLAYLMKYHAMSLLDAHTWTKSCRPII. The active-site Phosphocysteine intermediate is Cys104.

It belongs to the protein-tyrosine phosphatase family. Non-receptor class dual specificity subfamily.

It is found in the cytoplasm. The protein resides in the nucleus. It localises to the mitochondrion inner membrane. The catalysed reaction is O-phospho-L-tyrosyl-[protein] + H2O = L-tyrosyl-[protein] + phosphate. It catalyses the reaction O-phospho-L-seryl-[protein] + H2O = L-seryl-[protein] + phosphate. It carries out the reaction O-phospho-L-threonyl-[protein] + H2O = L-threonyl-[protein] + phosphate. Its function is as follows. Can dephosphorylate single and diphosphorylated synthetic MAPK peptides, with preference for the phosphotyrosine and diphosphorylated forms over phosphothreonine. In vitro, dephosphorylates p-nitrophenyl phosphate (pNPP). This Pongo abelii (Sumatran orangutan) protein is Dual specificity protein phosphatase 18 (DUSP18).